Consider the following 2131-residue polypeptide: Nonribosomal peptide synthetase criC (2131 aa).

The adenylation 1 stretch occupies residues Phe13 to Arg407. One can recognise a Carrier 1 domain in the interval Ser525–Thr601. The residue at position 562 (Ser562) is an O-(pantetheine 4'-phosphoryl)serine. The segment at Arg598–Thr627 is disordered. Positions Pro625–Asp1018 are condensation 1. Residues Ala1069–Arg1447 form an adenylation 2 region. In terms of domain architecture, Carrier 2 spans Ser1569 to Gln1647. Position 1607 is an O-(pantetheine 4'-phosphoryl)serine (Ser1607). The interval Ser1688–Met2086 is condensation 2.

This sequence belongs to the NRP synthetase family. The cofactor is pantetheine 4'-phosphate.

The enzyme catalyses L-tryptophan + L-alanine + 2 ATP = cyclo(L-tryptophyl-L-alanyl) + 2 ADP + 2 phosphate + 2 H(+). The protein operates within secondary metabolite biosynthesis. It participates in alkaloid biosynthesis. Functionally, nonribosomal peptide synthetase; part of the gene cluster that mediates the biosynthesis of echinulin family alkaloid. The pathway begins with the biosynthesis of the cyclic dipeptide cyclo-L-Trp-L-Ala (cyclo-TA) by the NRPS criC via condensation of L-alanine and L-tryptophan. The prenyltransferase criA then catalyzes the first prenylation step, a reverse prenylation reaction at C2, to yield preechinulin. Preechinulin is the substrate of the cytochrome P450 monooxygenase criE that catalyzes the formation of the double bond between C10 and C11 to produce neoechulin A. The unique prenyltransferase criF functions as a competitive enzyme with criE for preechinulin metabolization and uses preechinulin for effective regiospecific prenylations. Preechinulin is prenylated by criF at C5 or C7. C7-prenylation leads to accumulation of tardioxopiperazine B without further modification by criF. In contrast, the C5-prenylated tardioxopiperazine A can be prenylated again by criF, predominantly at C7 to form echinulin or less frequently at C4 to give variecolorin L. CriF also accepts neoechilunin A to produce varlecolorin G (prenylation at C5) or isoechinulin A (prenylation at C7). CriF further converts isoechinulin A into dehydroechinulin. Moreover, a yet unidentified enzyme can also convert neoechilunin A into neoechilunin B by introducing a double bond between positions C14 and C17 and thus provides a further substrate to criF for C5 and C7 prenylation. The polypeptide is Nonribosomal peptide synthetase criC (Aspergillus cristatus (Chinese Fuzhuan brick tea-fermentation fungus)).